A 166-amino-acid polypeptide reads, in one-letter code: NAD(P)H-quinone oxidoreductase subunit I, chloroplastic (166 aa).

2 consecutive 4Fe-4S ferredoxin-type domains span residues 55–84 and 95–124; these read GRIH…VDWK and LNYS…MTEE. Positions 64, 67, 70, 74, 104, 107, 110, and 114 each coordinate [4Fe-4S] cluster.

It belongs to the complex I 23 kDa subunit family. In terms of assembly, NDH is composed of at least 16 different subunits, 5 of which are encoded in the nucleus. [4Fe-4S] cluster serves as cofactor.

Its subcellular location is the plastid. The protein localises to the chloroplast thylakoid membrane. The enzyme catalyses a plastoquinone + NADH + (n+1) H(+)(in) = a plastoquinol + NAD(+) + n H(+)(out). The catalysed reaction is a plastoquinone + NADPH + (n+1) H(+)(in) = a plastoquinol + NADP(+) + n H(+)(out). Its function is as follows. NDH shuttles electrons from NAD(P)H:plastoquinone, via FMN and iron-sulfur (Fe-S) centers, to quinones in the photosynthetic chain and possibly in a chloroplast respiratory chain. The immediate electron acceptor for the enzyme in this species is believed to be plastoquinone. Couples the redox reaction to proton translocation, and thus conserves the redox energy in a proton gradient. The sequence is that of NAD(P)H-quinone oxidoreductase subunit I, chloroplastic from Enydra sessilis (Smallray swampwort).